Here is a 247-residue protein sequence, read N- to C-terminus: UPF0246 protein LAF_1150 (247 aa).

The protein belongs to the UPF0246 family.

The chain is UPF0246 protein LAF_1150 from Limosilactobacillus fermentum (strain NBRC 3956 / LMG 18251) (Lactobacillus fermentum).